The chain runs to 157 residues: NADPH-dependent 7-cyano-7-deazaguanine reductase (157 aa).

The active-site Thioimide intermediate is the Cys-56. Asp-63 serves as the catalytic Proton donor. Substrate-binding positions include 78–80 (VES) and 97–98 (HE).

It belongs to the GTP cyclohydrolase I family. QueF type 1 subfamily.

Its subcellular location is the cytoplasm. The enzyme catalyses 7-aminomethyl-7-carbaguanine + 2 NADP(+) = 7-cyano-7-deazaguanine + 2 NADPH + 3 H(+). It participates in tRNA modification; tRNA-queuosine biosynthesis. Its function is as follows. Catalyzes the NADPH-dependent reduction of 7-cyano-7-deazaguanine (preQ0) to 7-aminomethyl-7-deazaguanine (preQ1). The sequence is that of NADPH-dependent 7-cyano-7-deazaguanine reductase from Parabacteroides distasonis (strain ATCC 8503 / DSM 20701 / CIP 104284 / JCM 5825 / NCTC 11152).